A 95-amino-acid chain; its full sequence is Large ribosomal subunit protein bL28 (95 aa).

The segment at 1-28 (MARKRTLGGKAPQAGNKVSHSQRKTRRQ) is disordered.

Belongs to the bacterial ribosomal protein bL28 family.

The chain is Large ribosomal subunit protein bL28 from Magnetococcus marinus (strain ATCC BAA-1437 / JCM 17883 / MC-1).